We begin with the raw amino-acid sequence, 113 residues long: UPF0339 protein MS1092 (113 aa).

2 consecutive repeat copies span residues 11–59 (AKDG…NFEF) and 62–110 (NKNG…IKDI).

This sequence belongs to the UPF0339 family. Duplicated subfamily.

The protein is UPF0339 protein MS1092 of Mannheimia succiniciproducens (strain KCTC 0769BP / MBEL55E).